The following is a 451-amino-acid chain: UDP-N-acetylmuramoylalanine--D-glutamate ligase (451 aa).

Residue 119-125 (GSNGKTT) coordinates ATP.

Belongs to the MurCDEF family.

The protein resides in the cytoplasm. The catalysed reaction is UDP-N-acetyl-alpha-D-muramoyl-L-alanine + D-glutamate + ATP = UDP-N-acetyl-alpha-D-muramoyl-L-alanyl-D-glutamate + ADP + phosphate + H(+). It participates in cell wall biogenesis; peptidoglycan biosynthesis. In terms of biological role, cell wall formation. Catalyzes the addition of glutamate to the nucleotide precursor UDP-N-acetylmuramoyl-L-alanine (UMA). The sequence is that of UDP-N-acetylmuramoylalanine--D-glutamate ligase from Bacillus cytotoxicus (strain DSM 22905 / CIP 110041 / 391-98 / NVH 391-98).